The sequence spans 205 residues: Thymidylate kinase (205 aa).

7–14 (GIDGSGKT) contributes to the ATP binding site.

Belongs to the thymidylate kinase family.

It carries out the reaction dTMP + ATP = dTDP + ADP. Phosphorylation of dTMP to form dTDP in both de novo and salvage pathways of dTTP synthesis. In Wolbachia sp. subsp. Brugia malayi (strain TRS), this protein is Thymidylate kinase.